Reading from the N-terminus, the 271-residue chain is 5-deoxy-glucuronate isomerase (271 aa).

The protein belongs to the isomerase IolB family.

The catalysed reaction is 5-deoxy-D-glucuronate = 5-dehydro-2-deoxy-D-gluconate. The protein operates within polyol metabolism; myo-inositol degradation into acetyl-CoA; acetyl-CoA from myo-inositol: step 4/7. Functionally, involved in the isomerization of 5-deoxy-glucuronate (5DG) to 5-dehydro-2-deoxy-D-gluconate (DKG or 2-deoxy-5-keto-D-gluconate). In Shouchella clausii (strain KSM-K16) (Alkalihalobacillus clausii), this protein is 5-deoxy-glucuronate isomerase.